Reading from the N-terminus, the 87-residue chain is Small ribosomal subunit protein bS20 (87 aa).

The segment covering 1 to 27 (MANIKSAKKRALQSERRRQHNASRRSM) has biased composition (basic residues). The segment at 1–31 (MANIKSAKKRALQSERRRQHNASRRSMTRTS) is disordered.

It belongs to the bacterial ribosomal protein bS20 family.

Its function is as follows. Binds directly to 16S ribosomal RNA. The chain is Small ribosomal subunit protein bS20 from Pseudoalteromonas atlantica (strain T6c / ATCC BAA-1087).